The following is a 282-amino-acid chain: MSTPQLVLPAPAKLNLMLHILGRRPDGYHELQTLFQFLDYGDELGFSVREDGEIHLQTDVPGVPHDSNLIVKAARALQQQSGCTLGMDIWLEKRLPMGGGIGGGSSDAATTLLALNHLWQLGWDEDRLAQLGLTLGADVPVFVRGHAAFAEGVGEILTPVDPEEPWYLVLVPQVSVSTAEIFSDPLLTRDTPPIKVRPVPKGNSRNDCKAVVERRYPEVRNALNLLGKFTEAKLTGTGSCVFGAFPNKAEADKVSALLTETLTGFVAKGSNISMLHRKLQIL.

Lys13 is an active-site residue. Residue 96-106 (PMGGGIGGGSS) coordinates ATP. Asp138 is an active-site residue.

It belongs to the GHMP kinase family. IspE subfamily.

It carries out the reaction 4-CDP-2-C-methyl-D-erythritol + ATP = 4-CDP-2-C-methyl-D-erythritol 2-phosphate + ADP + H(+). Its pathway is isoprenoid biosynthesis; isopentenyl diphosphate biosynthesis via DXP pathway; isopentenyl diphosphate from 1-deoxy-D-xylulose 5-phosphate: step 3/6. Catalyzes the phosphorylation of the position 2 hydroxy group of 4-diphosphocytidyl-2C-methyl-D-erythritol. The protein is 4-diphosphocytidyl-2-C-methyl-D-erythritol kinase of Pseudomonas syringae pv. syringae (strain B728a).